The following is a 330-amino-acid chain: Beta-ketoacyl-[acyl-carrier-protein] synthase III (330 aa).

Residues C115 and H255 contribute to the active site. The ACP-binding stretch occupies residues 256-260 (QANVR). The active site involves N285.

The protein belongs to the thiolase-like superfamily. FabH family. As to quaternary structure, homodimer.

The protein localises to the cytoplasm. The catalysed reaction is malonyl-[ACP] + acetyl-CoA + H(+) = 3-oxobutanoyl-[ACP] + CO2 + CoA. It functions in the pathway lipid metabolism; fatty acid biosynthesis. Functionally, catalyzes the condensation reaction of fatty acid synthesis by the addition to an acyl acceptor of two carbons from malonyl-ACP. Catalyzes the first condensation reaction which initiates fatty acid synthesis and may therefore play a role in governing the total rate of fatty acid production. Possesses both acetoacetyl-ACP synthase and acetyl transacylase activities. Its substrate specificity determines the biosynthesis of branched-chain and/or straight-chain of fatty acids. The sequence is that of Beta-ketoacyl-[acyl-carrier-protein] synthase III from Symbiobacterium thermophilum (strain DSM 24528 / JCM 14929 / IAM 14863 / T).